A 449-amino-acid chain; its full sequence is Phosphoglucosamine mutase (449 aa).

Serine 102 acts as the Phosphoserine intermediate in catalysis. 4 residues coordinate Mg(2+): serine 102, aspartate 241, aspartate 243, and aspartate 245. Residue serine 102 is modified to Phosphoserine.

Belongs to the phosphohexose mutase family. Mg(2+) serves as cofactor. Post-translationally, activated by phosphorylation.

The enzyme catalyses alpha-D-glucosamine 1-phosphate = D-glucosamine 6-phosphate. Catalyzes the conversion of glucosamine-6-phosphate to glucosamine-1-phosphate. This Roseobacter denitrificans (strain ATCC 33942 / OCh 114) (Erythrobacter sp. (strain OCh 114)) protein is Phosphoglucosamine mutase.